A 192-amino-acid chain; its full sequence is NF-kappa-B inhibitor-interacting Ras-like protein 1 (192 aa).

Gly11 to Thr18 contributes to the GTP binding site. Residues Asp35 to Tyr43 carry the Effector region motif. Positions His58–Ser93 are interactions with NFKBIA and NFKBIB. GTP is bound by residues Asp61 to Leu65 and Asn120 to Asp123. Residues Leu168 to Asn192 form a disordered region.

Belongs to the small GTPase superfamily. Ras family. KappaB-Ras subfamily. As to quaternary structure, interacts with both NF-kappa-B inhibitor alpha (NFKBIA) and beta (NFKBIB) in vitro. However, it probably only interacts with NFKBIB in vivo. Forms a complex with NFKBIB and NF-kappa-B heterodimer (p50/NFKB1 and p65/RELA). Also interacts with c-Rel (REL).

It localises to the cytoplasm. In terms of biological role, atypical Ras-like protein that acts as a potent regulator of NF-kappa-B activity by preventing the degradation of NF-kappa-B inhibitor beta (NFKBIB) by most signals, explaining why NFKBIB is more resistant to degradation. May act by blocking phosphorylation of NFKBIB and mediating cytoplasmic retention of p65/RELA NF-kappa-B subunit. It is unclear whether it acts as a GTPase. Both GTP- and GDP-bound forms block phosphorylation of NFKBIB. The polypeptide is NF-kappa-B inhibitor-interacting Ras-like protein 1 (Nkiras1) (Mus musculus (Mouse)).